We begin with the raw amino-acid sequence, 847 residues long: FAST kinase domain-containing protein 1, mitochondrial (847 aa).

At K360 the chain carries N6-acetyllysine. Positions 777 to 837 (IALEFLDSKA…KDARMDYLRE (61 aa)) constitute an RAP domain.

The protein belongs to the FAST kinase family. Expression detected in spleen, thymus, testis, ovary, colon, heart, smooth muscle, kidney, brain, lung, liver and white adipose tissue with highest expression in heart.

Its subcellular location is the mitochondrion. Involved in the down-regulation of mitochondrial MT-ND3 mRNA levels which leads to decreased respiratory complex I abundance and activity. This chain is FAST kinase domain-containing protein 1, mitochondrial (FASTKD1), found in Homo sapiens (Human).